Reading from the N-terminus, the 502-residue chain is Cytochrome P450 71A8 (502 aa).

A helical transmembrane segment spans residues 16 to 36; that stretch reads IISHTLAFQALVSLILLISIT. Positions 93–119 are disordered; sequence PVSSRRRPRGNHENSRSRLRRPRGSRS. Cys-447 serves as a coordination point for heme.

It belongs to the cytochrome P450 family. Heme is required as a cofactor.

The protein resides in the membrane. This is Cytochrome P450 71A8 (CYP71A8) from Mentha piperita (Peppermint).